The primary structure comprises 334 residues: Pre-mRNA leakage protein 39 (334 aa).

In terms of assembly, interacts with MLP1 and MLP2.

It is found in the nucleus membrane. Involved in the nuclear retention of improperly spliced pre-mRNAs. The polypeptide is Pre-mRNA leakage protein 39 (PML39) (Saccharomyces cerevisiae (strain ATCC 204508 / S288c) (Baker's yeast)).